Here is a 250-residue protein sequence, read N- to C-terminus: tRNA (guanine-N(7)-)-methyltransferase (250 aa).

The S-adenosyl-L-methionine site is built by E86, E111, D138, and D161. D161 is an active-site residue. Residues K165, D197, and 229 to 232 (TEFE) each bind substrate.

Belongs to the class I-like SAM-binding methyltransferase superfamily. TrmB family.

The enzyme catalyses guanosine(46) in tRNA + S-adenosyl-L-methionine = N(7)-methylguanosine(46) in tRNA + S-adenosyl-L-homocysteine. It functions in the pathway tRNA modification; N(7)-methylguanine-tRNA biosynthesis. Catalyzes the formation of N(7)-methylguanine at position 46 (m7G46) in tRNA. This chain is tRNA (guanine-N(7)-)-methyltransferase, found in Treponema pallidum (strain Nichols).